A 153-amino-acid chain; its full sequence is Pheromone-binding protein Gp-9 (153 aa).

Residues 1–19 (MKTFVLHIFIFALVAFASA) form the signal peptide. Intrachain disulfides connect Cys37-Cys77, Cys73-Cys129, and Cys118-Cys138.

The protein belongs to the PBP/GOBP family. As to quaternary structure, homodimer.

It is found in the secreted. Its function is as follows. Colony queen number, a major feature of social organization, is associated with worker genotype for Gp-9. Colonies are headed by either a single reproductive queen (monogyne form) or multiple queens (polygyne form). Differences in worker Gp-9 genotypes between social forms may cause differences in workers' abilities to recognize queens and regulate their numbers. This is Pheromone-binding protein Gp-9 from Solenopsis pusillignis (Fire ant).